Consider the following 435-residue polypeptide: 5'-deoxyadenosine deaminase (435 aa).

The Zn(2+) site is built by His64 and His66. Substrate contacts are provided by Glu93 and His185. His212 is a binding site for Zn(2+). The substrate site is built by Glu215 and Asp300. Asp300 is a Zn(2+) binding site.

The protein belongs to the metallo-dependent hydrolases superfamily. MTA/SAH deaminase family. As to quaternary structure, homotetramer. Zn(2+) serves as cofactor.

It catalyses the reaction 5'-deoxyadenosine + H2O + H(+) = 5'-deoxyinosine + NH4(+). It carries out the reaction S-adenosyl-L-homocysteine + H2O + H(+) = S-inosyl-L-homocysteine + NH4(+). The catalysed reaction is S-methyl-5'-thioadenosine + H2O + H(+) = S-methyl-5'-thioinosine + NH4(+). The enzyme catalyses adenosine + H2O + H(+) = inosine + NH4(+). It functions in the pathway amino-acid biosynthesis; S-adenosyl-L-methionine biosynthesis. Catalyzes the deamination of three SAM-derived enzymatic products, namely 5'-deoxyadenosine, S-adenosyl-L-homocysteine, and 5'-methylthioadenosine, to produce the inosine analogs. Can also deaminate adenosine. The preferred substrate for this enzyme is 5'-deoxyadenosine, but all these substrates are efficiently deaminated. Likely functions in a S-adenosyl-L-methionine (SAM) recycling pathway from S-adenosyl-L-homocysteine (SAH) produced from SAM-dependent methylation reactions. May also be involved in the recycling of 5'-deoxyadenosine, whereupon the 5'-deoxyribose moiety of 5'-deoxyinosine is further metabolized to deoxyhexoses used for the biosynthesis of aromatic amino acids in methanogens. This Methanobrevibacter smithii (strain ATCC 35061 / DSM 861 / OCM 144 / PS) protein is 5'-deoxyadenosine deaminase.